The sequence spans 257 residues: Receptor expression-enhancing protein 4 (257 aa).

2 consecutive transmembrane segments (helical) span residues 1–21 (MVSW…YPAY) and 42–62 (WIVF…ISWF). Phosphoserine occurs at positions 152 and 194. Residues 159-257 (IPDTSAPTYQ…KKTIPSDLDS (99 aa)) are disordered. Position 196 is a phosphothreonine (Thr196). A Phosphoserine modification is found at Ser202. Phosphothreonine is present on Thr250. A Phosphoserine modification is found at Ser253.

Belongs to the DP1 family.

It localises to the endoplasmic reticulum membrane. Microtubule-binding protein required to ensure proper cell division and nuclear envelope reassembly by sequestering the endoplasmic reticulum away from chromosomes during mitosis. Probably acts by clearing the endoplasmic reticulum membrane from metaphase chromosomes. The chain is Receptor expression-enhancing protein 4 (Reep4) from Rattus norvegicus (Rat).